The primary structure comprises 368 residues: N-succinylamino acid racemase (368 aa).

2-succinylbenzoate-binding positions include serine 135 and 161–163; that span reads KLK. The active-site Proton donor is the lysine 163. Mg(2+) is bound at residue aspartate 189. Residue asparagine 191 coordinates 2-succinylbenzoate. Mg(2+) is bound by residues glutamate 214 and aspartate 239. Catalysis depends on lysine 263, which acts as the Proton acceptor. Isoleucine 293 serves as a coordination point for 2-succinylbenzoate.

The protein belongs to the mandelate racemase/muconate lactonizing enzyme family. MenC type 2 subfamily. In terms of assembly, homooctamer. A divalent metal cation serves as cofactor.

The catalysed reaction is N-acetyl-D-methionine = N-acetyl-L-methionine. It catalyses the reaction (1R,6R)-6-hydroxy-2-succinyl-cyclohexa-2,4-diene-1-carboxylate = 2-succinylbenzoate + H2O. Its activity is regulated as follows. Inhibited by EDTA and sulfhydryl reagents such as p-chloromercuribenzoic acid. Both OSBS and NAAAR activities are inhibited competitively by salicylhydroxamate. In terms of biological role, acts as a N-succinylamino acid racemase (NSAR) that catalyzes the racemization of N-succinyl-phenylglycine and N-succinyl-methionine. Can catalyze the racemization of a broad range of N-acylamino acids, including N-acetyl-D/L-methionine, N-propionyl-D/L-methionine, N-butyryl-D/L-methionine and N-chloroacetyl-L-valine. Also converts 2-succinyl-6-hydroxy-2,4-cyclohexadiene-1-carboxylate (SHCHC) to 2-succinylbenzoate (OSB). Catalyzes both N-succinylamino acid racemization and OSB synthesis at equivalent rates. NSAR is probably the biological function of this enzyme. This chain is N-succinylamino acid racemase, found in Amycolatopsis sp.